The sequence spans 676 residues: tRNA 5-methylaminomethyl-2-thiouridine biosynthesis bifunctional protein MnmC (676 aa).

The segment at 1–241 (MFTVTPAKIY…KRECLCGIKN (241 aa)) is tRNA (mnm(5)s(2)U34)-methyltransferase. The segment at 268-676 (IGGGIASLFT…RKLLKGTEIK (409 aa)) is FAD-dependent cmnm(5)s(2)U34 oxidoreductase.

It in the N-terminal section; belongs to the methyltransferase superfamily. tRNA (mnm(5)s(2)U34)-methyltransferase family. In the C-terminal section; belongs to the DAO family. The cofactor is FAD.

The protein localises to the cytoplasm. It catalyses the reaction 5-aminomethyl-2-thiouridine(34) in tRNA + S-adenosyl-L-methionine = 5-methylaminomethyl-2-thiouridine(34) in tRNA + S-adenosyl-L-homocysteine + H(+). Catalyzes the last two steps in the biosynthesis of 5-methylaminomethyl-2-thiouridine (mnm(5)s(2)U) at the wobble position (U34) in tRNA. Catalyzes the FAD-dependent demodification of cmnm(5)s(2)U34 to nm(5)s(2)U34, followed by the transfer of a methyl group from S-adenosyl-L-methionine to nm(5)s(2)U34, to form mnm(5)s(2)U34. This Histophilus somni (strain 129Pt) (Haemophilus somnus) protein is tRNA 5-methylaminomethyl-2-thiouridine biosynthesis bifunctional protein MnmC.